Here is a 209-residue protein sequence, read N- to C-terminus: Uracil phosphoribosyltransferase (209 aa).

Residues R79, R104, and 131-139 (DPMLATGGS) contribute to the 5-phospho-alpha-D-ribose 1-diphosphate site. Residues I194 and 199-201 (GDA) contribute to the uracil site. D200 contributes to the 5-phospho-alpha-D-ribose 1-diphosphate binding site.

Belongs to the UPRTase family. Requires Mg(2+) as cofactor.

It carries out the reaction UMP + diphosphate = 5-phospho-alpha-D-ribose 1-diphosphate + uracil. The protein operates within pyrimidine metabolism; UMP biosynthesis via salvage pathway; UMP from uracil: step 1/1. Allosterically activated by GTP. Functionally, catalyzes the conversion of uracil and 5-phospho-alpha-D-ribose 1-diphosphate (PRPP) to UMP and diphosphate. The chain is Uracil phosphoribosyltransferase from Streptococcus uberis (strain ATCC BAA-854 / 0140J).